Here is a 153-residue protein sequence, read N- to C-terminus: Probable phospholipase A2 homolog 2 (153 aa).

A signal peptide spans 1–25; the sequence is MRFFLKLAPRCSVLLLLLLVTASRG. Disulfide bonds link cysteine 42–cysteine 70, cysteine 46–cysteine 76, cysteine 51–cysteine 123, cysteine 63–cysteine 83, cysteine 82–cysteine 109, and cysteine 89–cysteine 102. Positions 62, 64, and 67 each coordinate Ca(2+). The active site involves histidine 86. Aspartate 87 is a Ca(2+) binding site.

It belongs to the phospholipase A2 family. The cofactor is Ca(2+).

It is found in the secreted. The catalysed reaction is a 1,2-diacyl-sn-glycero-3-phosphocholine + H2O = a 1-acyl-sn-glycero-3-phosphocholine + a fatty acid + H(+). Its function is as follows. PA2 catalyzes the calcium-dependent hydrolysis of the 2-acyl groups in 3-sn-phosphoglycerides. Releases lysophospholipids (LPLs) and free fatty acids (FFAs) from membrane phospholipids in response to hormones and other external stimuli. The polypeptide is Probable phospholipase A2 homolog 2 (PLA2-II) (Oryza sativa subsp. japonica (Rice)).